The following is a 275-amino-acid chain: NH(3)-dependent NAD(+) synthetase (275 aa).

46–53 is a binding site for ATP; it reads GISGGQDS. D52 provides a ligand contact to Mg(2+). Residue R140 coordinates deamido-NAD(+). An ATP-binding site is contributed by T160. E165 serves as a coordination point for Mg(2+). 2 residues coordinate deamido-NAD(+): K173 and D180. ATP contacts are provided by K189 and T211. Position 260–261 (260–261) interacts with deamido-NAD(+); that stretch reads HK.

Belongs to the NAD synthetase family. Homodimer.

It catalyses the reaction deamido-NAD(+) + NH4(+) + ATP = AMP + diphosphate + NAD(+) + H(+). It functions in the pathway cofactor biosynthesis; NAD(+) biosynthesis; NAD(+) from deamido-NAD(+) (ammonia route): step 1/1. Its function is as follows. Catalyzes the ATP-dependent amidation of deamido-NAD to form NAD. Uses ammonia as a nitrogen source. The polypeptide is NH(3)-dependent NAD(+) synthetase (Salmonella typhi).